Consider the following 141-residue polypeptide: Hemoglobin subunit alpha-A (141 aa).

The region spanning 1-141 (VLSANDKTNV…VGNVLSAKYR (141 aa)) is the Globin domain. An O2-binding site is contributed by histidine 58. Histidine 87 is a binding site for heme b.

It belongs to the globin family. Heterotetramer of two alpha chains and two beta chains. Red blood cells.

Its function is as follows. Involved in oxygen transport from the lung to the various peripheral tissues. The protein is Hemoglobin subunit alpha-A (HBAA) of Trigonoceps occipitalis (White-headed vulture).